We begin with the raw amino-acid sequence, 627 residues long: Zinc finger protein 256 (627 aa).

The 83-residue stretch at 14 to 96 (VTFEDVAVYF…QKTNPCEICG (83 aa)) folds into the KRAB domain. The segment at 55-76 (GSGAGDEEAPYQQSTSPQRVSQ) is disordered. A compositionally biased stretch (polar residues) spans 65 to 75 (YQQSTSPQRVS). 15 C2H2-type zinc fingers span residues 90–112 (NPCEICGPVLRQILHLVEHQGTH), 239–261 (YMCSECGKSFSTSCSLSDHLRVH), 267–289 (YTCGECGKSYRQSSSLITHRRIH), 295–317 (HQCDECGKLFNRKYDLLIHQRVH), 323–345 (YKCSECGKSFSHSSSLITHQRIH), 351–373 (YECSECGKSFIHSSSLITHQRVH), 379–401 (YMCSECGKSFSQSCHLIKHRRLH), 407–429 (YECSECGKLFTYRSRFFQHQRVH), 435–457 (HECHECGKLFSRKFDLIVHERVH), 463–485 (YECSECGKSFTCKSYLISHWKVH), 491–513 (YECGECGKSFTHSSTLLQHQRVH), 519–541 (YECNECGKFFSQSSSLIRHRRSH), 547–569 (YECSECWKSFSNHSSLVKHRRVH), 575–597 (YECSECGKSFSQSSNLTNHQRIH), and 603–625 (YECSDCGKFFTFNSNLLKHQNVH).

It belongs to the krueppel C2H2-type zinc-finger protein family. As to quaternary structure, interacts with TRIM28.

The protein localises to the nucleus. In terms of biological role, transcriptional repressor that plays a role in cell proliferation. Requires TRIM28 for its activity. The sequence is that of Zinc finger protein 256 (ZNF256) from Homo sapiens (Human).